The primary structure comprises 1131 residues: Protein TOPLESS (1131 aa).

One can recognise a LisH domain in the interval 4–36 (LSRELVFLILQFLDEEKFKETVHKLEQESGFFF). In terms of domain architecture, CTLH spans 34 to 92 (FFFNMKYFEDEVHNGNWDEVEKYLSGFTKVDDNRYSMKIFFEIRKQKYLEALDKHDRPK). Serine 214 carries the phosphoserine modification. Residues 286–305 (TPPTNASLDYPSADSEHVSK) form a disordered region. WD repeat units lie at residues 353–393 (SQGS…RLVQ), 415–454 (EPVVSVNRVIWSPDGSLFGVAYSRHIVQLYSYHGGEDMRQ), 460–501 (AHVG…KRHT), 504–545 (GHEA…SRVD), 548–591 (APGR…VKRT), 595–634 (FHKRSLGVVQFDTTKNRYLAAGDDFSIKFWDMDAVQLLTA), 639–678 (GGLQASPRIRFNKEGSLLAVSGNENVIKIMANSDGLRLLH), 710–756 (DRSA…EPSQ), 766–805 (LRVAKISRLIFTNSGNAILALASNAIHLLWKWQRNERNAT), 833–871 (NPEEAVPCFALSKNDSYVMSASGGKISLFNMMTFKTMAT), 874–914 (PPPP…VKSK), 917–956 (GHSKRITGLAFSNVLNVLVSSGADAQLCVWNTDGWEKQRS), 967–1005 (NSAPSDTRVQFHQDQAHFLVVHETQLAIYETTKLECMKQ), 1010–1049 (ESLAPITHATFSCDSQLVYASFMDATVCVFSSANLRLRCR), and 1060–1102 (LSNS…GKWG). Positions 1100-1131 (KWGVAPPAENGSASGAPTAPSVGASASDQPQR) are disordered.

Tetramer. Homodimer. Interacts (via the LisH domain) with WUS (via the C-terminal domain). Interacts with NINJA/AFPH2. Interacts with IAA1; IAA2; IAA3; IAA4; IAA6; IAA8; IAA9; IAA11; IAA13; IAA14; IAA17; IAA18; IAA26; IAA27 and IAA28. Interacts (via the LisH domain) with IAA12/BDL (via domain I). Can form a complex with IAA12 and ARF5. Interacts with AP2 (via EAR motif) and HDA19. Interacts with TIFY5A/JAZ8 (via EAR motif). Interacts with SPEAR3/TIE1. Interacts with SPL (via EAR motif). Interacts with ZAT2 and ZAT3 (via the EAR motif). Interacts with JAZ13 (via EAR motif). Interacts with GIR1 and GIR2. In terms of tissue distribution, expressed in embryo and in extraembryonic tissues. Expressed in inflorescences, flowers, floral meristems, developing anthers and ovules. Detected in the vascular tissues, shoot apical meristem, cotyledons and young leaves. Expressed ubiquitously in the pistils, stamens and pollens.

It localises to the nucleus. Transcriptional corepressor. May repress the expression of root-promoting genes in the top half of the embryo to allow proper differentiation of the shoot pole during the transition stage of embryogenesis. Regulates the expression of PLT1 and PLT2. Negative regulator of jasmonate responses. Negative regulator of auxin responses. Negative regulator of multiple floral organ identity genes. Required for ovule development. The polypeptide is Protein TOPLESS (TPL) (Arabidopsis thaliana (Mouse-ear cress)).